The chain runs to 303 residues: Olfactory receptor 4X2 (303 aa).

Topologically, residues 1–17 (MTEFIFLVLSPNQEVQR) are extracellular. A helical membrane pass occupies residues 18–41 (VCFVIFLFLYTAIVLGNFLIVLTV). Over 42–49 (MTSRSLGS) the chain is Cytoplasmic. Residues 50–71 (PMYFFLSYLSFMEICYSSATAP) form a helical membrane-spanning segment. The Extracellular portion of the chain corresponds to 72 to 92 (KLISDLLAERKVISWWGCMAQ). A disulfide bridge connects residues Cys-89 and Cys-181. A helical membrane pass occupies residues 93–112 (LFFLHFFGGTEIFLLTVMAY). Residues 113–131 (DHYVAICKPLSYTTIMNWQ) are Cytoplasmic-facing. Residues 132 to 150 (VCTVLVGIAWVGGFMHSFA) form a helical membrane-spanning segment. Residues 151-187 (QILLIFHLLFCGPNVINHYFCDLVPLLKLACSDTFLI) lie on the Extracellular side of the membrane. The helical transmembrane segment at 188–211 (GLLIVANGGTLSVISFGVLLASYM) threads the bilayer. Topologically, residues 212-227 (VILLHLRTWSSEGWCK) are cytoplasmic. A helical transmembrane segment spans residues 228-250 (ALSTCGSHFAVVILFFGPCVFNS). Residues 251 to 261 (LRPSTTLPIDK) lie on the Extracellular side of the membrane. A helical membrane pass occupies residues 262–281 (MVAVFYTVITAILNPVIYSL). Residues 282 to 303 (RNAEMRKAMKRLWIRTLRLNEK) are Cytoplasmic-facing.

Belongs to the G-protein coupled receptor 1 family.

The protein resides in the cell membrane. In terms of biological role, odorant receptor. This is Olfactory receptor 4X2 (OR4X2) from Homo sapiens (Human).